Here is a 306-residue protein sequence, read N- to C-terminus: Curved DNA-binding protein (306 aa).

One can recognise a J domain in the interval 5-69; sequence DYYAIMGVKP…QRRAEYDQMW (65 aa).

It localises to the cytoplasm. The protein resides in the nucleoid. In terms of biological role, DNA-binding protein that preferentially recognizes a curved DNA sequence. It is probably a functional analog of DnaJ; displays overlapping activities with DnaJ, but functions under different conditions, probably acting as a molecular chaperone in an adaptive response to environmental stresses other than heat shock. Lacks autonomous chaperone activity; binds native substrates and targets them for recognition by DnaK. Its activity is inhibited by the binding of CbpM. The polypeptide is Curved DNA-binding protein (Shigella boydii serotype 18 (strain CDC 3083-94 / BS512)).